The following is a 108-amino-acid chain: Nucleoid-associated protein GWCH70_0020 (108 aa).

Residues 1-34 form a disordered region; the sequence is MMRGGMGNMQKMMKQMQKMQKEMQKAQEQLAEKT. The span at 9 to 18 shows a compositional bias: low complexity; it reads MQKMMKQMQK. A compositionally biased stretch (basic and acidic residues) spans 19–34; the sequence is MQKEMQKAQEQLAEKT.

The protein belongs to the YbaB/EbfC family. In terms of assembly, homodimer.

The protein resides in the cytoplasm. Its subcellular location is the nucleoid. Binds to DNA and alters its conformation. May be involved in regulation of gene expression, nucleoid organization and DNA protection. The chain is Nucleoid-associated protein GWCH70_0020 from Geobacillus sp. (strain WCH70).